We begin with the raw amino-acid sequence, 626 residues long: Basic helix-loop-helix ARNT-like protein 1 (626 aa).

Residues 1 to 58 (MADQRMDISSTISDFMSPGPTDLLSSSLGTSGVDCNRKRKGSATDYQESMDTDKDDPH) form a disordered region. Phosphoserine; by GSK3-beta is present on S17. A compositionally biased stretch (low complexity) spans 17 to 32 (SPGPTDLLSSSLGTSG). T21 carries the post-translational modification Phosphothreonine; by GSK3-beta. The Nuclear localization signal signature appears at 36–41 (NRKRKG). A bHLH domain is found at 72 to 125 (NAREAHSQIEKRRRDKMNSFIDELASLVPTCNAMSRKLDKLTVLRMAVQHMKTL). S78 carries the post-translational modification Phosphoserine. The residue at position 90 (S90) is a Phosphoserine; by CK2. A Nuclear export signal 1 motif is present at residues 142-152 (LSDDELKHLIL). In terms of domain architecture, PAS 1 spans 143 to 215 (SDDELKHLIL…EQLSSSDTAP (73 aa)). A Glycyl lysine isopeptide (Lys-Gly) (interchain with G-Cter in SUMO2 and SUMO3) cross-link involves residue K252. K259 participates in a covalent cross-link: Glycyl lysine isopeptide (Lys-Gly) (interchain with G-Cter in SUMO); alternate. A Glycyl lysine isopeptide (Lys-Gly) (interchain with G-Cter in SUMO2); alternate cross-link involves residue K259. One can recognise a PAS 2 domain in the interval 326-396 (PQPVNGEIRV…ECHRQVLQTR (71 aa)). The short motif at 361–369 (LAYLPQELL) is the Nuclear export signal 2 element. In terms of domain architecture, PAC spans 401 to 444 (TNCYKFKIKDGSFITLRSRWFSFMNPWTKEVEYIVSTNTVVLAN). Disordered regions lie at residues 459–492 (SPHSMDSMLPSGEGGPKRTHPTVPGIPGGTRAGA) and 511–595 (GSSP…SPSN). The tract at residues 508 to 588 (RIRGSSPSSC…IGIDMIDNDQ (81 aa)) is interaction with CIART. The span at 511 to 521 (GSSPSSCGSSP) shows a compositional bias: low complexity. An N6-acetyllysine modification is found at K538.

As to quaternary structure, component of the circadian clock oscillator which includes the CRY1/2 proteins, CLOCK or NPAS2, BMAL1 or BMAL2, CSNK1D and/or CSNK1E, TIMELESS and the PER1/2/3 proteins. Forms a heterodimer with CLOCK. The CLOCK-BMAL1 heterodimer is required for E-box-dependent transactivation, for CLOCK nuclear translocation and degradation, and, for phosphorylation of both CLOCK and BMAL1. Part of a nuclear complex which also includes RACK1 and PRKCA; RACK1 and PRKCA are recruited to the complex in a circadian manner. Interacts with NPAS2. Interacts with EZH2. Interacts with SUMO3. Interacts with SIRT1. Interacts with AHR. Interacts with ID1, ID2 and ID3. Interacts with DDX4. Interacts with OGT. Interacts with EED and SUZ12. Interacts with MTA1. Interacts with CIART. Interacts with HSP90. Interacts with KAT2B and EP300. Interacts with BHLHE40/DEC1 and BHLHE41/DEC2. Interacts with RELB and the interaction is enhanced in the presence of CLOCK. Interacts with PER1, PER2, CRY1 and CRY2 and this interaction requires a translocation to the nucleus. Interaction of the CLOCK-BMAL1 heterodimer with PER or CRY inhibits transcription activation. Interaction of the CLOCK-BMAL1 with CRY1 is independent of DNA but with PER2 is off DNA. The CLOCK-BMAL1 heterodimer interacts with GSK3B. Interacts with KDM5A. Interacts with KMT2A; in a circadian manner. Interacts with UBE3A. Interacts with PRKCG. Interacts with MAGEL2. Interacts with NCOA2. Interacts with THRAP3. The CLOCK-BMAL1 heterodimer interacts with PASD1. Interacts with PASD1. Interacts with USP9X. Interacts with PIWIL2 (via PIWI domain). Interacts with HDAC3. Interacts with HNF4A. Post-translationally, ubiquitinated, leading to its proteasomal degradation. Deubiquitinated by USP9X. O-glycosylated; contains O-GlcNAc. O-glycosylation by OGT prevents protein degradation by inhibiting ubiquitination. It also stabilizes the CLOCK-BMAL1 heterodimer thereby increasing CLOCK-BMAL1-mediated transcription of genes in the negative loop of the circadian clock such as PER1/2/3 and CRY1/2. In terms of processing, acetylated on Lys-538 by CLOCK during the repression phase of the circadian cycle. Acetylation facilitates recruitment of CRY1 protein and initiates the repression phase of the circadian cycle. Acetylated at Lys-538 by KAT5 during the activation phase of the cycle, leading to recruitment of the positive transcription elongation factor b (P-TEFb) and BRD4, followed by productive elongation of circadian transcripts. Deacetylated by SIRT1, which may result in decreased protein stability. Post-translationally, phosphorylated upon dimerization with CLOCK. Phosphorylation enhances the transcriptional activity, alters the subcellular localization and decreases the stability of the CLOCK-BMAL1 heterodimer by promoting its degradation. Phosphorylation shows circadian variations in the liver with a peak between CT10 to CT14. Phosphorylation at Ser-90 by CK2 is essential for its nuclear localization, its interaction with CLOCK and controls CLOCK nuclear entry. Dephosphorylation at Ser-78 is important for dimerization with CLOCK and transcriptional activity. Sumoylated on Lys-259 upon dimerization with CLOCK. Predominantly conjugated to poly-SUMO2/3 rather than SUMO1 and the level of these conjugates undergo rhythmic variation, peaking at CT9-CT12. Sumoylation localizes it exclusively to the PML body and promotes its ubiquitination in the PML body, ubiquitin-dependent proteasomal degradation and the transcriptional activity of the CLOCK-BMAL1 heterodimer. In terms of processing, undergoes lysosome-mediated degradation in a time-dependent manner in the liver.

It is found in the nucleus. Its subcellular location is the cytoplasm. It localises to the PML body. Functionally, transcriptional activator which forms a core component of the circadian clock. The circadian clock, an internal time-keeping system, regulates various physiological processes through the generation of approximately 24 hour circadian rhythms in gene expression, which are translated into rhythms in metabolism and behavior. It is derived from the Latin roots 'circa' (about) and 'diem' (day) and acts as an important regulator of a wide array of physiological functions including metabolism, sleep, body temperature, blood pressure, endocrine, immune, cardiovascular, and renal function. Consists of two major components: the central clock, residing in the suprachiasmatic nucleus (SCN) of the brain, and the peripheral clocks that are present in nearly every tissue and organ system. Both the central and peripheral clocks can be reset by environmental cues, also known as Zeitgebers (German for 'timegivers'). The predominant Zeitgeber for the central clock is light, which is sensed by retina and signals directly to the SCN. The central clock entrains the peripheral clocks through neuronal and hormonal signals, body temperature and feeding-related cues, aligning all clocks with the external light/dark cycle. Circadian rhythms allow an organism to achieve temporal homeostasis with its environment at the molecular level by regulating gene expression to create a peak of protein expression once every 24 hours to control when a particular physiological process is most active with respect to the solar day. Transcription and translation of core clock components (CLOCK, NPAS2, BMAL1, BMAL2, PER1, PER2, PER3, CRY1 and CRY2) plays a critical role in rhythm generation, whereas delays imposed by post-translational modifications (PTMs) are important for determining the period (tau) of the rhythms (tau refers to the period of a rhythm and is the length, in time, of one complete cycle). A diurnal rhythm is synchronized with the day/night cycle, while the ultradian and infradian rhythms have a period shorter and longer than 24 hours, respectively. Disruptions in the circadian rhythms contribute to the pathology of cardiovascular diseases, cancer, metabolic syndromes and aging. A transcription/translation feedback loop (TTFL) forms the core of the molecular circadian clock mechanism. Transcription factors, CLOCK or NPAS2 and BMAL1 or BMAL2, form the positive limb of the feedback loop, act in the form of a heterodimer and activate the transcription of core clock genes and clock-controlled genes (involved in key metabolic processes), harboring E-box elements (5'-CACGTG-3') within their promoters. The core clock genes: PER1/2/3 and CRY1/2 which are transcriptional repressors form the negative limb of the feedback loop and interact with the CLOCK|NPAS2-BMAL1|BMAL2 heterodimer inhibiting its activity and thereby negatively regulating their own expression. This heterodimer also activates nuclear receptors NR1D1/2 and RORA/B/G, which form a second feedback loop and which activate and repress BMAL1 transcription, respectively. BMAL1 positively regulates myogenesis and negatively regulates adipogenesis via the transcriptional control of the genes of the canonical Wnt signaling pathway. Plays a role in normal pancreatic beta-cell function; regulates glucose-stimulated insulin secretion via the regulation of antioxidant genes NFE2L2/NRF2 and its targets SESN2, PRDX3, CCLC and CCLM. Negatively regulates the mTORC1 signaling pathway; regulates the expression of MTOR and DEPTOR. Controls diurnal oscillations of Ly6C inflammatory monocytes; rhythmic recruitment of the PRC2 complex imparts diurnal variation to chemokine expression that is necessary to sustain Ly6C monocyte rhythms. Regulates the expression of HSD3B2, STAR, PTGS2, CYP11A1, CYP19A1 and LHCGR in the ovary and also the genes involved in hair growth. Plays an important role in adult hippocampal neurogenesis by regulating the timely entry of neural stem/progenitor cells (NSPCs) into the cell cycle and the number of cell divisions that take place prior to cell-cycle exit. Regulates the circadian expression of CIART and KLF11. The CLOCK-BMAL1 heterodimer regulates the circadian expression of SERPINE1/PAI1, VWF, B3, CCRN4L/NOC, NAMPT, DBP, MYOD1, PPARGC1A, PPARGC1B, SIRT1, GYS2, F7, NGFR, GNRHR, BHLHE40/DEC1, ATF4, MTA1, KLF10 and also genes implicated in glucose and lipid metabolism. Promotes rhythmic chromatin opening, regulating the DNA accessibility of other transcription factors. The NPAS2-BMAL1 heterodimer positively regulates the expression of MAOA, F7 and LDHA and modulates the circadian rhythm of daytime contrast sensitivity by regulating the rhythmic expression of adenylate cyclase type 1 (ADCY1) in the retina. The preferred binding motif for the CLOCK-BMAL1 heterodimer is 5'-CACGTGA-3', which contains a flanking adenine nucleotide at the 3-prime end of the canonical 6-nucleotide E-box sequence. CLOCK specifically binds to the half-site 5'-CAC-3', while BMAL1 binds to the half-site 5'-GTGA-3'. The CLOCK-BMAL1 heterodimer also recognizes the non-canonical E-box motifs 5'-AACGTGA-3' and 5'-CATGTGA-3'. Essential for the rhythmic interaction of CLOCK with ASS1 and plays a critical role in positively regulating CLOCK-mediated acetylation of ASS1. Plays a role in protecting against lethal sepsis by limiting the expression of immune checkpoint protein CD274 in macrophages in a PKM2-dependent manner. Regulates the diurnal rhythms of skeletal muscle metabolism via transcriptional activation of genes promoting triglyceride synthesis (DGAT2) and metabolic efficiency (COQ10B). The sequence is that of Basic helix-loop-helix ARNT-like protein 1 (BMAL1) from Mesocricetus auratus (Golden hamster).